A 391-amino-acid polypeptide reads, in one-letter code: MEKAIRNFLSQESAGGILLLVAVALAMLLANSPLSGLYQGFLNTEMQVRFGALDINKPLLLWINDGLMALFFLLIGLEVKRELLEGALSSPSKASLPTFAAIGGMLVPAAIYLFFNFDDPVTKVGWAIPAATDIAFALGIMALLGNRVPVALKVFLLALAIIDDLGVIVIIALFYSTDLSMLSLVIAAIAVTGLVALNRKGVTSLAPYGVLGIILWIAVLKSGVHATLAGVVIAFCIPLRAKDGSSPSEHLEHSLHPWSNFLILPVFAFANAGVPLGNVGFDSILSPVPVGIALGLLLGKPIGVLLFSYAAVKLRLAELPKGIGWHQIAPVAVMCGIGFTMSMFIASLAFEHGGELYGDLARIGILLGSLFAAVIGYFWLSKVLPKAGERI.

Helical transmembrane passes span 14-34, 59-79, 95-115, 124-144, 154-174, 177-197, 213-233, 261-281, 287-307, 328-348, and 363-383; these read AGGILLLVAVALAMLLANSPL, LLLWINDGLMALFFLLIGLEV, SLPTFAAIGGMLVPAAIYLFF, VGWAIPAATDIAFALGIMALL, VFLLALAIIDDLGVIVIIALF, TDLSMLSLVIAAIAVTGLVAL, IILWIAVLKSGVHATLAGVVI, FLILPVFAFANAGVPLGNVGF, PVPVGIALGLLLGKPIGVLLF, IAPVAVMCGIGFTMSMFIASL, and IGILLGSLFAAVIGYFWLSKV.

This sequence belongs to the NhaA Na(+)/H(+) (TC 2.A.33) antiporter family.

It localises to the cell inner membrane. It catalyses the reaction Na(+)(in) + 2 H(+)(out) = Na(+)(out) + 2 H(+)(in). Its function is as follows. Na(+)/H(+) antiporter that extrudes sodium in exchange for external protons. This chain is Na(+)/H(+) antiporter NhaA, found in Shewanella amazonensis (strain ATCC BAA-1098 / SB2B).